A 339-amino-acid polypeptide reads, in one-letter code: Diacylglycerol acyltransferase/mycolyltransferase Ag85A (339 aa).

A signal peptide spans 1–43 (MKLVDRFRGAVTGMPRRLMVGAVGAALLSGLVGFVGGSATASA). 85 to 86 (MR) serves as a coordination point for substrate. A fibronectin-binding region spans residues 101-111 (FEWYNQSGISV). Cys130 and Cys135 are oxidised to a cystine. Substrate is bound by residues Ser169 and Asp197. Residue Ser169 is the Nucleophile of the active site. Residue Glu272 is part of the active site. Residues 274 to 277 (FVRT), Lys281, and 304 to 306 (HDW) contribute to the substrate site. The active site involves His304.

Belongs to the mycobacterial A85 antigen family. In terms of assembly, homodimer.

It localises to the secreted. It is found in the cell wall. The protein resides in the cytoplasm. The catalysed reaction is an acyl-CoA + a 1,2-diacyl-sn-glycerol = a triacyl-sn-glycerol + CoA. The enzyme catalyses 2 alpha,alpha'-trehalose 6-mycolate = alpha,alpha'-trehalose 6,6'-bismycolate + alpha,alpha-trehalose. Its function is as follows. The antigen 85 proteins (FbpA, FbpB, FbpC) are responsible for the high affinity of mycobacteria for fibronectin, a large adhesive glycoprotein, which facilitates the attachment of M.tuberculosis to murine alveolar macrophages (AMs). They also help to maintain the integrity of the cell wall by catalyzing the transfer of mycolic acids to cell wall arabinogalactan, and through the synthesis of alpha,alpha-trehalose dimycolate (TDM, cord factor). They catalyze the transfer of a mycoloyl residue from one molecule of alpha,alpha-trehalose monomycolate (TMM) to another TMM, leading to the formation of TDM. FbpA mediates triacylglycerol (TAG) formation with long-chain acyl-CoA as the acyl donor and 1,2-dipalmitoyl-sn-glycerol (1,2-dipalmitin) as the acyl acceptor. It has a preference for C26:0-CoA over C18:1-CoA. The polypeptide is Diacylglycerol acyltransferase/mycolyltransferase Ag85A (fbpA) (Mycobacterium gordonae).